Reading from the N-terminus, the 317-residue chain is 1D-myo-inositol 2-acetamido-2-deoxy-alpha-D-glucopyranoside deacetylase (317 aa).

Zn(2+) contacts are provided by H15, D18, and H154. A disordered region spans residues 289 to 317 (QDLDNRNPNSQPPADQAREDHLLTGLGFA).

It belongs to the MshB deacetylase family. Zn(2+) serves as cofactor.

It carries out the reaction 1D-myo-inositol 2-acetamido-2-deoxy-alpha-D-glucopyranoside + H2O = 1D-myo-inositol 2-amino-2-deoxy-alpha-D-glucopyranoside + acetate. Functionally, catalyzes the deacetylation of 1D-myo-inositol 2-acetamido-2-deoxy-alpha-D-glucopyranoside (GlcNAc-Ins) in the mycothiol biosynthesis pathway. The chain is 1D-myo-inositol 2-acetamido-2-deoxy-alpha-D-glucopyranoside deacetylase from Segniliparus rotundus (strain ATCC BAA-972 / CDC 1076 / CIP 108378 / DSM 44985 / JCM 13578).